The sequence spans 102 residues: Small ribosomal subunit protein uS10 (102 aa).

It belongs to the universal ribosomal protein uS10 family. Part of the 30S ribosomal subunit.

Functionally, involved in the binding of tRNA to the ribosomes. The sequence is that of Small ribosomal subunit protein uS10 from Nitrosomonas eutropha (strain DSM 101675 / C91 / Nm57).